The following is a 112-amino-acid chain: Peptidyl-prolyl cis-trans isomerase FKBP12 (112 aa).

A disordered region spans residues M1–V22. One can recognise a PPIase FKBP-type domain in the interval G19–Q112. Residues C26 and C80 are joined by a disulfide bond.

This sequence belongs to the FKBP-type PPIase family. Interacts with FK506.

The protein localises to the cytoplasm. It carries out the reaction [protein]-peptidylproline (omega=180) = [protein]-peptidylproline (omega=0). Functionally, PPIases accelerate the folding of proteins. It catalyzes the cis-trans isomerization of proline imidic peptide bonds in oligopeptides. The sequence is that of Peptidyl-prolyl cis-trans isomerase FKBP12 (FKBP12) from Vicia faba (Broad bean).